Here is an 880-residue protein sequence, read N- to C-terminus: 3-isopropylmalate dehydratase large subunit gloJ (880 aa).

Residues cysteine 457, cysteine 520, and cysteine 523 each coordinate [4Fe-4S] cluster.

Belongs to the aconitase/IPM isomerase family. LeuC type 2 subfamily. The cofactor is [4Fe-4S] cluster.

The enzyme catalyses (2R,3S)-3-isopropylmalate = (2S)-2-isopropylmalate. It participates in mycotoxin biosynthesis. 3-isopropylmalate dehydratase large subunit; part of the gene cluster that mediates the biosynthesis of pneumocandins, lipohexapeptides of the echinocandin family that prevent fungal cell wall formation by non-competitive inhibition of beta-1,3-glucan synthase. The 10,12-dimethylmyristoyl side chain is synthesized by the reducing polyketide synthase gloL/GLPKS4. The thioesterase gloN/GLHYD exclusively interacts with gloL/GLPKS4 to maintain turnover of the polyketide side chain. The 10R,12S-dimethylmyristic acid is then transferred to the first thiolation domain of the nonribosomal peptide synthetase gloA/GLNRPS4 by the acyl-AMP ligase gloD/GLligase, followed by its acylation to L-ornithine to trigger elongation of the cyclic hexapeptide. L-ornithine, 4R-hydroxyl-L-proline (generated from L-proline by the dioxygenase gloF/GLOXY2), 3S-hydroxyl-L-homotyrosine (generated by gloG/GLHtyB, gloH/GLHtyA, gloI/GLHtyC, gloJ/GLHtyD and hydroxylated at C-3 by the dioxygenase gloM/GLOXY1), 3R-hydroxyl-L-glutamine (generated from L-glutamine probably by the dioxygenase gloE/GLOXY3) and 3S-hydroxyl-L-proline (generated from L-proline by the dioxygenase gloF/GLOXY2 to yield pneumocandin B0), or 3S-hydroxyl-4S-methyl-L-proline (generated from L-leucine by the dioxygenase gloC/GLOXY4 to yield pneumocandin A0) are sequentially added to the growing chain. The last C domain of gloA/GLNRPS4 is proposed to be responsible for cyclization by condensation to form the peptide bond between L-ornithine and 3S-hydroxyl-4S-methyl-L-proline (for pneumocandin A0) or 3S-hydroxyl-L-proline (for pneumocandin B0). Finally, the subsequent C-4 hydroxylation of 3S-hydroxyl-L-homotyrosine and L-ornithine dihydroxylation at C-4 and C-5 are performed by the cytochrome P450 monooxygenases gloP/GLP450-1 and gloO/GLP450-2, respectively. This Glarea lozoyensis (strain ATCC 20868 / MF5171) protein is 3-isopropylmalate dehydratase large subunit gloJ.